The chain runs to 575 residues: Probable ferredoxin/ferredoxin--NADP reductase (575 aa).

4Fe-4S ferredoxin-type domains follow at residues 2-29 (PHVI…PTPD) and 37-66 (EMLY…PNTR). 7 residues coordinate [4Fe-4S] cluster: Cys9, Cys15, Cys19, Cys46, Cys49, Cys52, and Cys56. A ferredoxin--NADP reductase region spans residues 115–575 (VAVVGSGPAA…GQPIVLTVPL (461 aa)). Residues Ala123, Glu143, Leu151, and Ile187 each contribute to the FAD site. Residues Arg213, 258–261 (NGNV), 302–303 (RR), and Glu314 each bind NADP(+). Residues Trp456 and 463–465 (GFI) contribute to the FAD site. Residue Gly463 participates in NADP(+) binding.

The protein in the C-terminal section; belongs to the ferredoxin--NADP reductase family. Requires [4Fe-4S] cluster as cofactor. The cofactor is FAD.

The catalysed reaction is 2 reduced [2Fe-2S]-[ferredoxin] + NADP(+) + H(+) = 2 oxidized [2Fe-2S]-[ferredoxin] + NADPH. The sequence is that of Probable ferredoxin/ferredoxin--NADP reductase (fprB) from Mycobacterium bovis (strain ATCC BAA-935 / AF2122/97).